The primary structure comprises 448 residues: Acyl-lipid (9-3)-desaturase (448 aa).

Residues 6–90 (KKYITSDELK…LKDYSVSEVS (85 aa)) enclose the Cytochrome b5 heme-binding domain. 2 residues coordinate heme: histidine 41 and histidine 64. A run of 2 helical transmembrane segments spans residues 112–132 (IMFA…YGVL) and 137–157 (VLVH…SGWI). The short motif at 159–163 (HDAGH) is the Histidine box-1 element. The helical transmembrane segment at 172-192 (LNKFMGIFAANCLSGISIGWW) threads the bilayer. The Histidine box-2 signature appears at 196–200 (HNAHH). A run of 3 helical transmembrane segments spans residues 212–232 (LQYI…TSHF), 254–274 (FYPI…IMLL), and 286–306 (LLGC…LPNW). The Histidine box-3 signature appears at 373–377 (QIEHH).

This sequence belongs to the fatty acid desaturase type 1 family.

The protein localises to the endoplasmic reticulum membrane. The catalysed reaction is (9Z,12Z,15Z)-octadecatrienoyl-containing glycerolipid + 2 Fe(II)-[cytochrome b5] + O2 + 2 H(+) = (6Z,9Z,12Z,15Z)-octadecatetraenoyl-containing glycerolipid + 2 Fe(III)-[cytochrome b5] + 2 H2O. It catalyses the reaction a (9Z,12Z)-octadecadienoyl-containing glycerolipid + 2 Fe(II)-[cytochrome b5] + O2 + 2 H(+) = (6Z,9Z,12Z)-octadecatrienoyl-containing glycerolipid + 2 Fe(III)-[cytochrome b5] + 2 H2O. It participates in lipid metabolism; polyunsaturated fatty acid biosynthesis. Its function is as follows. Fatty acid desaturase able to introduce a delta(6)-double bond into delta(9)-unsaturated fatty-acid substrates. Can use both linoleic acid (18:2(9Z,12Z)) and alpha-linolenic acid (18:3(9Z,12Z,15Z)) as substrates. The protein is Acyl-lipid (9-3)-desaturase of Borago officinalis (Bourrache).